The chain runs to 428 residues: Diaminopimelate decarboxylase (428 aa).

An N6-(pyridoxal phosphate)lysine modification is found at Lys64. Residues Gly239 and 281–284 (EPGR) each bind pyridoxal 5'-phosphate. Substrate is bound by residues Arg284, Arg319, and Tyr323. Cys350 (proton donor) is an active-site residue. The substrate site is built by Glu351 and Tyr379. Tyr379 is a pyridoxal 5'-phosphate binding site.

Belongs to the Orn/Lys/Arg decarboxylase class-II family. LysA subfamily. Homodimer. It depends on pyridoxal 5'-phosphate as a cofactor.

It catalyses the reaction meso-2,6-diaminopimelate + H(+) = L-lysine + CO2. The protein operates within amino-acid biosynthesis; L-lysine biosynthesis via DAP pathway; L-lysine from DL-2,6-diaminopimelate: step 1/1. Specifically catalyzes the decarboxylation of meso-diaminopimelate (meso-DAP) to L-lysine. In Methanothermobacter thermautotrophicus (strain ATCC 29096 / DSM 1053 / JCM 10044 / NBRC 100330 / Delta H) (Methanobacterium thermoautotrophicum), this protein is Diaminopimelate decarboxylase.